The sequence spans 365 residues: MFVTKIQISSFRNIAAAEIRFDRRFNVLHGANGQGKTSVLEAIYLLGTMKSFRLAKTPDLVSWNTPHALLRGWAERDGVGREIALYLGKEGRKARVDQKPVTRLADFFGNVNAVVFSPEEIAMARSGPDLRRRYLDRAIFSGDLGYLLLHHEYHRLLKQRNALLKRGSREGLDIWTGQLAEAGTRLMVKRMGYLAEIEPLVQRFYREIAGGEEEAGLAYRPHLTTPDLVSREGTDALLALFGAHEAEELRRGTTVVGPHRDDVDFVLNGRVIRTHGSQGQQRSFVLALKMAEIEYLERLNDAPPVLLLDDISSELDPQRNANLMTFLREKRMQVFITTTDVSTLRLAGIATHASFHVSRGTVTPL.

Gly30–Thr37 lines the ATP pocket.

Belongs to the RecF family.

The protein localises to the cytoplasm. Functionally, the RecF protein is involved in DNA metabolism; it is required for DNA replication and normal SOS inducibility. RecF binds preferentially to single-stranded, linear DNA. It also seems to bind ATP. This Geobacter metallireducens (strain ATCC 53774 / DSM 7210 / GS-15) protein is DNA replication and repair protein RecF.